The primary structure comprises 371 residues: Histidinol-phosphate aminotransferase (371 aa).

K228 bears the N6-(pyridoxal phosphate)lysine mark.

The protein belongs to the class-II pyridoxal-phosphate-dependent aminotransferase family. Histidinol-phosphate aminotransferase subfamily. Pyridoxal 5'-phosphate serves as cofactor.

The catalysed reaction is L-histidinol phosphate + 2-oxoglutarate = 3-(imidazol-4-yl)-2-oxopropyl phosphate + L-glutamate. It functions in the pathway amino-acid biosynthesis; L-histidine biosynthesis; L-histidine from 5-phospho-alpha-D-ribose 1-diphosphate: step 7/9. The chain is Histidinol-phosphate aminotransferase from Methanococcus maripaludis (strain C7 / ATCC BAA-1331).